The following is a 350-amino-acid chain: Flap endonuclease 1 (350 aa).

An N-domain region spans residues 1-102 (MGVTALRELI…REIERRQKLK (102 aa)). Positions 31, 84, 156, 158, 177, 179, and 240 each coordinate Mg(2+). The segment at 120-261 (EARKYAQMSA…TALRYVKSYG (142 aa)) is I-domain. The tract at residues 339-347 (KQSTLDMFF) is interaction with PCNA.

The protein belongs to the XPG/RAD2 endonuclease family. FEN1 subfamily. In terms of assembly, interacts with PCNA. PCNA stimulates the nuclease activity without altering cleavage specificity. The cofactor is Mg(2+).

Functionally, structure-specific nuclease with 5'-flap endonuclease and 5'-3' exonuclease activities involved in DNA replication and repair. During DNA replication, cleaves the 5'-overhanging flap structure that is generated by displacement synthesis when DNA polymerase encounters the 5'-end of a downstream Okazaki fragment. Binds the unpaired 3'-DNA end and kinks the DNA to facilitate 5' cleavage specificity. Cleaves one nucleotide into the double-stranded DNA from the junction in flap DNA, leaving a nick for ligation. Also involved in the base excision repair (BER) pathway. Acts as a genome stabilization factor that prevents flaps from equilibrating into structures that lead to duplications and deletions. Also possesses 5'-3' exonuclease activity on nicked or gapped double-stranded DNA. In Ignicoccus hospitalis (strain KIN4/I / DSM 18386 / JCM 14125), this protein is Flap endonuclease 1.